Reading from the N-terminus, the 142-residue chain is Fusaric acid resistance protein FusB (142 aa).

The segment at A73–R142 is disordered. Residues S81 to R142 show a composition bias toward low complexity.

In terms of biological role, involved in the resistance (detoxification) of the fungal toxin fusaric acid. The protein is Fusaric acid resistance protein FusB (fusB) of Burkholderia cepacia (Pseudomonas cepacia).